The primary structure comprises 292 residues: Calponin-1 (292 aa).

The region spanning 28 to 131 is the Calponin-homology (CH) domain; sequence PQTERQLRVW…STLIALASQA (104 aa). Calponin-like repeat units lie at residues 164–189, 204–229, and 243–268; these read IGLQ…RHLY, ISLQ…RQIF, and IGLQ…RQVY. The residue at position 170 (Thr-170) is a Phosphothreonine; by ROCK2. Phosphoserine; by PKC, CaMK2 and ROCK2 is present on Ser-175. Thr-180 and Thr-184 each carry phosphothreonine; by ROCK2. Residue Thr-184 is modified to Phosphothreonine; by PKC and CaMK2. Residues 185–193 form a calmodulin-binding region; that stretch reads RRHLYDPKL. At Thr-259 the chain carries Phosphothreonine; by ROCK2.

The protein belongs to the calponin family. Post-translationally, phosphorylation by PKC or CaM kinase II reduces the binding of calponin to F-actin and tropomyosin. As to expression, smooth muscle, and tissues containing significant amounts of smooth muscle.

Its function is as follows. Thin filament-associated protein that is implicated in the regulation and modulation of smooth muscle contraction. It is capable of binding to actin, calmodulin and tropomyosin. The interaction of calponin with actin inhibits the actomyosin Mg-ATPase activity. This chain is Calponin-1 (CNN1), found in Gallus gallus (Chicken).